The sequence spans 120 residues: Small ribosomal subunit protein eS25 (120 aa).

The disordered stretch occupies residues 1–32 (MPPKAGQTKKAKMEAANKGAKKTTKKWSKGQS). Over residues 19-28 (GAKKTTKKWS) the composition is skewed to basic residues.

The protein belongs to the eukaryotic ribosomal protein eS25 family.

This Leishmania infantum protein is Small ribosomal subunit protein eS25 (RPS25).